The following is a 301-amino-acid chain: Ribonuclease Z (301 aa).

7 residues coordinate Zn(2+): His-60, His-62, Asp-64, His-65, His-137, Asp-207, and His-265. Residue Asp-64 is the Proton acceptor of the active site.

The protein belongs to the RNase Z family. In terms of assembly, homodimer. The cofactor is Zn(2+).

The enzyme catalyses Endonucleolytic cleavage of RNA, removing extra 3' nucleotides from tRNA precursor, generating 3' termini of tRNAs. A 3'-hydroxy group is left at the tRNA terminus and a 5'-phosphoryl group is left at the trailer molecule.. In terms of biological role, zinc phosphodiesterase, which displays some tRNA 3'-processing endonuclease activity. Probably involved in tRNA maturation, by removing a 3'-trailer from precursor tRNA. The polypeptide is Ribonuclease Z (Exiguobacterium sibiricum (strain DSM 17290 / CCUG 55495 / CIP 109462 / JCM 13490 / 255-15)).